Here is an 814-residue protein sequence, read N- to C-terminus: Leucine-rich repeat-containing protein 41 (814 aa).

Positions 45–54 (ALFELCGRAV) are interaction with Elongin BC complex. Serine 155, serine 276, and serine 326 each carry phosphoserine. The tract at residues 265–408 (LCGEASRGRA…KKGARTRQGC (144 aa)) is disordered. Threonine 327 carries the post-translational modification Phosphothreonine. Over residues 354–385 (TKRPPSAPATTSSASASSSTSSSKRAPASSAP) the composition is skewed to low complexity. Serine 375 is subject to Phosphoserine. Residues 389–403 (PLKRFKRAAGKKGAR) are compositionally biased toward basic residues. LRR repeat units follow at residues 489–509 (WVSLESLTLSYNGLGSNIFRL), 520–532 (AGCRLRALHLSDL), 533–557 (FSPLPILELTRAIVRALPLLRVLSI), 615–637 (SGSLQQLSLDSATFASPQDFGLV), 638–661 (LQTLKEYNLTLKRLSFHDMNLADC), 703–730 (NSTLKGLRLPGNRLGNAGLLALADVFSE), and 733–754 (SSSLCQLDISSNCIKPDGLLEF).

In terms of assembly, part of a E3 ubiquitin ligase complex with elongin BC complex (ELOB and ELOC), RBX1 and CUL5.

This Bos taurus (Bovine) protein is Leucine-rich repeat-containing protein 41 (LRRC41).